Reading from the N-terminus, the 248-residue chain is 14-3-3 protein sigma (248 aa).

Serine 5, serine 74, and serine 248 each carry phosphoserine.

The protein belongs to the 14-3-3 family. In terms of assembly, homodimer. Interacts with KRT17 and SAMSN1. Found in a complex with XPO7, EIF4A1, ARHGAP1, VPS26A, VPS29 and VPS35. Interacts with GAB2. Interacts with SRPK2. Interacts with COPS6. Interacts with COP1; this interaction leads to proteasomal degradation. Interacts with the 'Thr-369' phosphorylated form of DAPK2. Interacts with PI4KB. Interacts with SLITRK1. Interacts with LRRK2; this interaction is dependent on LRRK2 phosphorylation. Interacts with PKP3 (via N-terminus); the interaction maintains the cytoplasmic pool of PKP3, facilitates PKP3 exchange at desmosomes and restricts PKP3 localization to existing desmosome cell junctions. Interacts with LCP2. Post-translationally, ubiquitinated. Ubiquitination by RFFL induces proteasomal degradation and indirectly regulates p53/TP53 activation.

Its subcellular location is the cytoplasm. The protein localises to the nucleus. It localises to the secreted. Its function is as follows. Adapter protein implicated in the regulation of a large spectrum of both general and specialized signaling pathways. Binds to a large number of partners, usually by recognition of a phosphoserine or phosphothreonine motif. Binding generally results in the modulation of the activity of the binding partner. Promotes cytosolic retention of GBP1 GTPase by binding to phosphorylated GBP1, thereby inhibiting the innate immune response. Also acts as a TP53/p53-regulated inhibitor of G2/M progression. When bound to KRT17, regulates protein synthesis and epithelial cell growth by stimulating Akt/mTOR pathway. Acts to maintain desmosome cell junction adhesion in epithelial cells via interacting with and sequestering PKP3 to the cytoplasm, thereby restricting its translocation to existing desmosome structures and therefore maintaining desmosome protein homeostasis. Also acts to facilitate PKP3 exchange at desmosome plaques, thereby maintaining keratinocyte intercellular adhesion. May also regulate MDM2 autoubiquitination and degradation and thereby activate p53/TP53. This chain is 14-3-3 protein sigma (SFN), found in Bos taurus (Bovine).